A 500-amino-acid chain; its full sequence is NAD(P)H-quinone oxidoreductase chain 4, chloroplastic (500 aa).

14 consecutive transmembrane segments (helical) span residues phenylalanine 4–phenylalanine 24, valine 31–phenylalanine 51, glycine 84–alanine 104, serine 111–phenylalanine 129, leucine 134–methionine 154, phenylalanine 167–leucine 187, alanine 208–isoleucine 228, histidine 242–valine 262, alanine 272–alanine 292, isoleucine 305–aspartate 325, glycine 330–glycine 350, leucine 386–threonine 406, isoleucine 416–methionine 436, and phenylalanine 463–phenylalanine 483.

This sequence belongs to the complex I subunit 4 family.

Its subcellular location is the plastid. It is found in the chloroplast thylakoid membrane. It carries out the reaction a plastoquinone + NADH + (n+1) H(+)(in) = a plastoquinol + NAD(+) + n H(+)(out). It catalyses the reaction a plastoquinone + NADPH + (n+1) H(+)(in) = a plastoquinol + NADP(+) + n H(+)(out). In Manihot esculenta (Cassava), this protein is NAD(P)H-quinone oxidoreductase chain 4, chloroplastic.